The primary structure comprises 535 residues: Potassium channel subfamily K member 10 (535 aa).

Residues 1 to 68 (MYFSYIGYFF…GLQTVMKWKT (68 aa)) lie on the Cytoplasmic side of the membrane. The helical transmembrane segment at 69–89 (VVAIFVVVVVYLVTGGLVFRA) threads the bilayer. An intramembrane region (pore-forming) is located at residues 151–177 (LGSAFFFAGTVITTIGYGNIAPSTEGG). 4 residues coordinate K(+): Thr164, Ile165, Gly166, and Tyr167. The interval 164-169 (TIGYGN) is selectivity filter 1. The helical transmembrane segment at 179–199 (IFCILYAIFGIPLFGFLLAGI) threads the bilayer. The Cytoplasmic portion of the chain corresponds to 200-230 (GDQLGTIFGKSIARVEKVFRKKQVSQTKIRV). Residues 231 to 251 (ISTILFILAGCIVFVTIPAVI) traverse the membrane as a helical segment. An intramembrane region (pore-forming) is located at residues 260 to 291 (ALESIYFVVVTLTTVGFGDFVAGGNAGINYRE). Residues Thr273, Val274, Gly275, and Phe276 each contribute to the K(+) site. The interval 273 to 278 (TVGFGD) is selectivity filter 2. Residues 296 to 316 (LVWFWILVGLAYFAAVLSMIG) traverse the membrane as a helical segment. Residues 317–535 (DWLRVLSKKT…ENNSLLEDRN (219 aa)) are Cytoplasmic-facing. Disordered regions lie at residues 410–438 (QESI…ASED) and 510–535 (EMEN…EDRN). The segment covering 525-535 (LENNSLLEDRN) has biased composition (polar residues).

Homodimer; disulfide-linked. Forms heterodimers with other 2-pore domain K(+) channel subunits, such as KCNK2, KCNK4 and KCNK18. As to expression, detected in dorsal root ganglia (DRG) neurons (at protein level).

It localises to the cell membrane. The enzyme catalyses K(+)(in) = K(+)(out). It catalyses the reaction Rb(+)(in) = Rb(+)(out). It carries out the reaction Cs(+)(in) = Cs(+)(out). With respect to regulation, activated by stimuli such as mechanical stretch, acidic pH and polyunsaturated free fatty acids. Activated by a dihydroacridine analog, ML67-33. Inhibited by polycationic dye ruthenium red. Selectively activated by T2A3 (2-[(4-chloro-3-methylphenyl)amino] benzoic acid). Its function is as follows. K(+) channel that conducts voltage-dependent outward rectifying currents upon membrane depolarization. Voltage sensing is coupled to K(+) electrochemical gradient in an 'ion flux gating' mode where outward but not inward ion flow opens the gate. Converts to voltage-independent 'leak' conductance mode upon stimulation by various stimuli including mechanical membrane stretch, acidic pH, heat and lipids. Homo- and heterodimerizes to form functional channels with distinct regulatory and gating properties. In trigeminal ganglia sensory neurons, the heterodimer of KCNK10/TREK-2 and KCNK18/TRESK inhibits neuronal firing and neurogenic inflammation by stabilizing the resting membrane potential at K(+) equilibrium potential as well as by regulating the threshold of action potentials and the spike frequency. Permeable to other monovalent ions such as Rb(+) and Cs(+). This chain is Potassium channel subfamily K member 10, found in Mus musculus (Mouse).